The chain runs to 394 residues: Elongation factor Tu (394 aa).

A tr-type G domain is found at 10 to 204 (KPHVNVGTIG…ALDSYIPEPE (195 aa)). The interval 19–26 (GHVDHGKT) is G1. 19-26 (GHVDHGKT) contacts GTP. Position 26 (threonine 26) interacts with Mg(2+). The tract at residues 60–64 (GITIN) is G2. The segment at 81 to 84 (DCPG) is G3. Residues 81-85 (DCPGH) and 136-139 (NKCD) contribute to the GTP site. The G4 stretch occupies residues 136-139 (NKCD). Residues 174 to 176 (SAL) are G5.

Belongs to the TRAFAC class translation factor GTPase superfamily. Classic translation factor GTPase family. EF-Tu/EF-1A subfamily. As to quaternary structure, monomer.

Its subcellular location is the cytoplasm. The enzyme catalyses GTP + H2O = GDP + phosphate + H(+). GTP hydrolase that promotes the GTP-dependent binding of aminoacyl-tRNA to the A-site of ribosomes during protein biosynthesis. The sequence is that of Elongation factor Tu from Sodalis glossinidius (strain morsitans).